The sequence spans 29 residues: Cytochrome b6-f complex subunit 8 (29 aa).

Residues 3–23 (IVSIGWAALMVVFTFSLSLVV) form a helical membrane-spanning segment.

Belongs to the PetN family. As to quaternary structure, the 4 large subunits of the cytochrome b6-f complex are cytochrome b6, subunit IV (17 kDa polypeptide, PetD), cytochrome f and the Rieske protein, while the 4 small subunits are PetG, PetL, PetM and PetN. The complex functions as a dimer.

It is found in the plastid. It localises to the chloroplast thylakoid membrane. Functionally, component of the cytochrome b6-f complex, which mediates electron transfer between photosystem II (PSII) and photosystem I (PSI), cyclic electron flow around PSI, and state transitions. This Zygnema circumcarinatum (Green alga) protein is Cytochrome b6-f complex subunit 8.